Here is a 213-residue protein sequence, read N- to C-terminus: Probable transaldolase (213 aa).

Lys83 serves as the catalytic Schiff-base intermediate with substrate.

It belongs to the transaldolase family. Type 3B subfamily.

It localises to the cytoplasm. It carries out the reaction D-sedoheptulose 7-phosphate + D-glyceraldehyde 3-phosphate = D-erythrose 4-phosphate + beta-D-fructose 6-phosphate. The protein operates within carbohydrate degradation; pentose phosphate pathway; D-glyceraldehyde 3-phosphate and beta-D-fructose 6-phosphate from D-ribose 5-phosphate and D-xylulose 5-phosphate (non-oxidative stage): step 2/3. Functionally, transaldolase is important for the balance of metabolites in the pentose-phosphate pathway. This Geobacillus thermodenitrificans (strain NG80-2) protein is Probable transaldolase.